The following is a 450-amino-acid chain: Sulfide:quinone oxidoreductase, mitochondrial (450 aa).

FAD-binding positions include 53–54 (AG), glutamate 75, glutamine 83, and valine 118. N6-acetyllysine is present on residues lysine 134 and lysine 173. Cysteine 201 serves as the catalytic Cysteine persulfide intermediate. Residues cysteine 201 and cysteine 379 are joined by a disulfide bond. FAD is bound at residue aspartate 336. Serine 343 bears the Phosphoserine mark. Residue 344–347 (KTAA) coordinates FAD. Catalysis depends on cysteine 379, which acts as the Cysteine persulfide intermediate.

This sequence belongs to the SQRD family. The cofactor is FAD.

It is found in the mitochondrion. It carries out the reaction ubiquinone-10 + hydrogen sulfide + sulfite + 2 H(+) = ubiquinol-10 + thiosulfate. It catalyses the reaction a quinone + hydrogen sulfide + glutathione + H(+) = S-sulfanylglutathione + a quinol. The enzyme catalyses ubiquinone-10 + hydrogen sulfide + glutathione + H(+) = S-sulfanylglutathione + ubiquinol-10. Its function is as follows. Catalyzes the oxidation of hydrogen sulfide with the help of a quinone, such as ubiquinone-10, giving rise to thiosulfate and ultimately to sulfane (molecular sulfur) atoms. Requires an additional electron acceptor; can use sulfite, sulfide or cyanide (in vitro). It is believed the in vivo electron acceptor is glutathione. In Mus musculus (Mouse), this protein is Sulfide:quinone oxidoreductase, mitochondrial.